We begin with the raw amino-acid sequence, 132 residues long: Small ribosomal subunit protein uS8 (132 aa).

The protein belongs to the universal ribosomal protein uS8 family. Part of the 30S ribosomal subunit. Contacts proteins S5 and S12.

In terms of biological role, one of the primary rRNA binding proteins, it binds directly to 16S rRNA central domain where it helps coordinate assembly of the platform of the 30S subunit. The sequence is that of Small ribosomal subunit protein uS8 from Rhodospirillum rubrum (strain ATCC 11170 / ATH 1.1.1 / DSM 467 / LMG 4362 / NCIMB 8255 / S1).